A 262-amino-acid polypeptide reads, in one-letter code: Adenosylcobinamide-GDP ribazoletransferase (262 aa).

A run of 6 helical transmembrane segments spans residues 43–63, 66–86, 120–140, 146–166, 191–211, and 242–262; these read YFGL…WLTQ, LPAG…TGGF, GALA…ELAL, AGSA…SLIF, LFIL…IAAL, and AAQQ…GSIL.

The protein belongs to the CobS family. Mg(2+) is required as a cofactor.

Its subcellular location is the cell inner membrane. The enzyme catalyses alpha-ribazole + adenosylcob(III)inamide-GDP = adenosylcob(III)alamin + GMP + H(+). The catalysed reaction is alpha-ribazole 5'-phosphate + adenosylcob(III)inamide-GDP = adenosylcob(III)alamin 5'-phosphate + GMP + H(+). It functions in the pathway cofactor biosynthesis; adenosylcobalamin biosynthesis; adenosylcobalamin from cob(II)yrinate a,c-diamide: step 7/7. Functionally, joins adenosylcobinamide-GDP and alpha-ribazole to generate adenosylcobalamin (Ado-cobalamin). Also synthesizes adenosylcobalamin 5'-phosphate from adenosylcobinamide-GDP and alpha-ribazole 5'-phosphate. The chain is Adenosylcobinamide-GDP ribazoletransferase from Shewanella sp. (strain ANA-3).